A 235-amino-acid chain; its full sequence is Ribosomal RNA large subunit methyltransferase E (235 aa).

S-adenosyl-L-methionine is bound by residues glycine 76, tryptophan 78, aspartate 99, aspartate 115, and aspartate 139. Lysine 179 acts as the Proton acceptor in catalysis.

Belongs to the class I-like SAM-binding methyltransferase superfamily. RNA methyltransferase RlmE family.

The protein localises to the cytoplasm. It carries out the reaction uridine(2552) in 23S rRNA + S-adenosyl-L-methionine = 2'-O-methyluridine(2552) in 23S rRNA + S-adenosyl-L-homocysteine + H(+). Specifically methylates the uridine in position 2552 of 23S rRNA at the 2'-O position of the ribose in the fully assembled 50S ribosomal subunit. The protein is Ribosomal RNA large subunit methyltransferase E of Rhodopseudomonas palustris (strain BisB5).